The sequence spans 861 residues: ATP-dependent helicase rhp16 (861 aa).

Over residues 1–13 (MGTSCNKINSNSN) the composition is skewed to polar residues. The disordered stretch occupies residues 1-217 (MGTSCNKINS…KSIPSHERTH (217 aa)). 2 stretches are compositionally biased toward basic and acidic residues: residues 14–23 (KGKENMHFVL) and 38–57 (VERDDKLDMETTRWNGKEFE). A compositionally biased stretch (polar residues) spans 60–82 (LSTNKKLIIQSNNTSSQHSTPPL). The segment covering 83–95 (SISDTSTHTGSST) has biased composition (low complexity). Residues 96–106 (DNVEANPNTGF) show a composition bias toward polar residues. The span at 109–123 (ARKRSLRSSNLKKKF) shows a compositional bias: basic residues. Positions 131–145 (ESNESEFIDDDESDE) are enriched in acidic residues. Residues 193–204 (ARASSSASSSSR) show a composition bias toward low complexity. In terms of domain architecture, Helicase ATP-binding spans 268 to 442 (RQEDSSFGGG…FSLLRFLRAD (175 aa)). 281–288 (DEMGMGKT) lines the ATP pocket. Residues 393 to 396 (DEAH) carry the DEAH box motif. An RING-type zinc finger spans residues 609 to 652 (CKICDEVAQDAIESRCHHTFCRLCVTEYINAAGDGENVNCPSCF). A Helicase C-terminal domain is found at 695-848 (LVEELYLLRK…TIDQDEKALN (154 aa)).

This sequence belongs to the SNF2/RAD54 helicase family.

Its subcellular location is the nucleus. Involved in global genome repair (GGR) via nucleotide excision repair (NER), in conjunction with rhp7, after UV irradiation. This Schizosaccharomyces pombe (strain 972 / ATCC 24843) (Fission yeast) protein is ATP-dependent helicase rhp16 (rhp16).